We begin with the raw amino-acid sequence, 281 residues long: Large ribosomal subunit protein uL2 (281 aa).

Residues 222–281 are disordered; it reads TVRGSAMNPNDHPHGGGEGRQPIGRKSPMTPWGKRALGVKTRATKKASNQFIIRRRKETK.

The protein belongs to the universal ribosomal protein uL2 family. As to quaternary structure, part of the 50S ribosomal subunit. Forms a bridge to the 30S subunit in the 70S ribosome.

Functionally, one of the primary rRNA binding proteins. Required for association of the 30S and 50S subunits to form the 70S ribosome, for tRNA binding and peptide bond formation. It has been suggested to have peptidyltransferase activity; this is somewhat controversial. Makes several contacts with the 16S rRNA in the 70S ribosome. The sequence is that of Large ribosomal subunit protein uL2 from Metamycoplasma hominis (strain ATCC 23114 / DSM 25592 / NBRC 14850 / NCTC 10111 / PG21) (Mycoplasma hominis).